Consider the following 226-residue polypeptide: Lipoprotein-releasing system ATP-binding protein LolD 1 (226 aa).

The ABC transporter domain maps to 6 to 226 (LRLDKVTRSF…TLREGKVVAA (221 aa)). 42–49 (GPSGAGKS) serves as a coordination point for ATP.

The protein belongs to the ABC transporter superfamily. Lipoprotein translocase (TC 3.A.1.125) family. The complex is composed of two ATP-binding proteins (LolD) and two transmembrane proteins (LolC and LolE).

Its subcellular location is the cell inner membrane. Its function is as follows. Part of the ABC transporter complex LolCDE involved in the translocation of mature outer membrane-directed lipoproteins, from the inner membrane to the periplasmic chaperone, LolA. Responsible for the formation of the LolA-lipoprotein complex in an ATP-dependent manner. In Rhodospirillum rubrum (strain ATCC 11170 / ATH 1.1.1 / DSM 467 / LMG 4362 / NCIMB 8255 / S1), this protein is Lipoprotein-releasing system ATP-binding protein LolD 1.